The primary structure comprises 152 residues: Ubiquitin-conjugating enzyme E2 N (152 aa).

Residues 3 to 149 (GLPRRIIKET…ARAWTRLYAM (147 aa)) enclose the UBC core domain. Lysine 82 carries the N6-acetyllysine modification. Cysteine 87 functions as the Glycyl thioester intermediate in the catalytic mechanism. Residue lysine 92 forms a Glycyl lysine isopeptide (Lys-Gly) (interchain with G-Cter in ISG15) linkage.

This sequence belongs to the ubiquitin-conjugating enzyme family. Heterodimer with UBE2V2. Interacts (UBE2V2-UBE2N heterodimer) with the E3 ligase STUB1 (via the U-box domain); the complex has a specific 'Lys-63'-linked polyubiquitination activity. Interacts with RNF8 and RNF168. Interacts with RNF11. Interacts with the E3 ligases, HLTF and SHPRH; the interactions promote the 'Lys-63'-linked polyubiquitination of PCNA upon genotoxic stress and lead to DNA repair. Interacts with ARIH2 (via RING-type 2). Interacts with OTUB1; leading to inhibit E2-conjugating activity. Interacts with RIGI and RNF135; involved in RIGI ubiquitination and activation. In terms of processing, conjugation to ISG15 impairs formation of the thioester bond with ubiquitin but not interaction with UBE2V2.

It catalyses the reaction S-ubiquitinyl-[E1 ubiquitin-activating enzyme]-L-cysteine + [E2 ubiquitin-conjugating enzyme]-L-cysteine = [E1 ubiquitin-activating enzyme]-L-cysteine + S-ubiquitinyl-[E2 ubiquitin-conjugating enzyme]-L-cysteine.. It functions in the pathway protein modification; protein ubiquitination. Its activity is regulated as follows. Activity is inhibited by binding to OTUB1, which prevents 'Lys-63'-linked polyubiquitination. The UBE2V1-UBE2N and UBE2V2-UBE2N heterodimers catalyze the synthesis of non-canonical 'Lys-63'-linked polyubiquitin chains. This type of polyubiquitination does not lead to protein degradation by the proteasome. Mediates transcriptional activation of target genes. Plays a role in the control of progress through the cell cycle and differentiation. Plays a role in the error-free DNA repair pathway and contributes to the survival of cells after DNA damage. Acts together with the E3 ligases, HLTF and SHPRH, in the 'Lys-63'-linked poly-ubiquitination of PCNA upon genotoxic stress, which is required for DNA repair. Appears to act together with E3 ligase RNF5 in the 'Lys-63'-linked polyubiquitination of JKAMP thereby regulating JKAMP function by decreasing its association with components of the proteasome and ERAD. Promotes TRIM5 capsid-specific restriction activity and the UBE2V1-UBE2N heterodimer acts in concert with TRIM5 to generate 'Lys-63'-linked polyubiquitin chains which activate the MAP3K7/TAK1 complex which in turn results in the induction and expression of NF-kappa-B and MAPK-responsive inflammatory genes. Together with RNF135 and UB2V1, catalyzes the viral RNA-dependent 'Lys-63'-linked polyubiquitination of RIGI to activate the downstream signaling pathway that leads to interferon beta production. UBE2V1-UBE2N together with TRAF3IP2 E3 ubiquitin ligase mediate 'Lys-63'-linked polyubiquitination of TRAF6, a component of IL17A-mediated signaling pathway. This Macaca fascicularis (Crab-eating macaque) protein is Ubiquitin-conjugating enzyme E2 N (UBE2N).